Reading from the N-terminus, the 29-residue chain is Cytochrome b6-f complex subunit 8 (29 aa).

The helical transmembrane segment at 3-23 threads the bilayer; the sequence is IISLGWSSLLVVFTFSLSLVV.

This sequence belongs to the PetN family. The 4 large subunits of the cytochrome b6-f complex are cytochrome b6, subunit IV (17 kDa polypeptide, PetD), cytochrome f and the Rieske protein, while the 4 small subunits are PetG, PetL, PetM and PetN. The complex functions as a dimer.

It localises to the plastid. Its subcellular location is the chloroplast thylakoid membrane. Its function is as follows. Component of the cytochrome b6-f complex, which mediates electron transfer between photosystem II (PSII) and photosystem I (PSI), cyclic electron flow around PSI, and state transitions. This chain is Cytochrome b6-f complex subunit 8, found in Rhodomonas salina (Cryptomonas salina).